Consider the following 336-residue polypeptide: MDQQSFPSFMASTHFDSSINRNDTRLRIFSGTANPALAQEIACYMGLQLGKIKIKRFADGEIYVQLQESVRGCDVFLVQPTCPPANENLMELLIMIDACRRASAKNITAVIPYFGYARADRKTQGRESIAAKLVANLITEAGANRVLACDLHSGQSMGYFDIPVDHVYGQPVILDYLASKTICSDDLVVVSPDVGGVARARAFAKKLSDAPLAIVDKRRHGHNVAEVMNLIGDVKGKVAVMVDDMIDTAGTISKGAALLHQEGAREVYACSTHAVFSPPAIERLSSGLFQEVIITNTIPVLEKNYFPQLTVLSVANLLGETIWRVHDDCSVSSIFQ.

Positions 150, 152, 161, and 165 each coordinate Mg(2+). The binding of phosphoribosylpyrophosphate stretch occupies residues 236 to 251 (GKVAVMVDDMIDTAGT).

Belongs to the ribose-phosphate pyrophosphokinase family.

The enzyme catalyses D-ribose 5-phosphate + ATP = 5-phospho-alpha-D-ribose 1-diphosphate + AMP + H(+). The protein is Ribose-phosphate pyrophosphokinase 1 (PRS1) of Spinacia oleracea (Spinach).